We begin with the raw amino-acid sequence, 461 residues long: MDPLGAPSQFVDVDALPSWGDSCRDELNSSDTTAIVNTSNESLTDKNPVSESIFMLAGPDLKEDLQKLKGCRTGEAKLTKGFNLAARFIIHTVGPKYKSRYRTAAESSLYSCYRNVLQLAKEQSMSSVGFCVINSAKRGYPLEDATHIALRTVRRFLEIHGETIEKVVFAVSDLEEATYQKLLPLYFPRSLKEENRSLPYLPADIGNAEGEPVVPERQIRISEKPGAPEDNQEEEDEGLGVDLSFIGSHAFARMEGDIDKQRKLILQGQLSEAALQKQHQRNYNRWLCQARSEDLSDIASLKALYQTGVDNCGRTVMVVVGRNIPVTLIDMDKALLYFIHVMDHIAVKEYVLVYFHTLTSEYNHLDSDFLKKLYDVVDVKYKRNLKAVYFVHPTFRSKVSTWFFTTFSVSGLKDKIHHVDSLHQLFSAISPEQIDFPPFVLEYDARENGPYYTSYPPSPDL.

Positions 1–187 (MDPLGAPSQF…TYQKLLPLYF (187 aa)) constitute a Macro domain. Ser-244 is modified (phosphoserine). A CRAL-TRIO domain is found at 297-445 (DIASLKALYQ…FPPFVLEYDA (149 aa)).

Belongs to the GDAP2 family.

The polypeptide is Ganglioside-induced differentiation-associated protein 2 (GDAP2) (Macaca fascicularis (Crab-eating macaque)).